Consider the following 307-residue polypeptide: Methionyl-tRNA formyltransferase (307 aa).

108-111 (SLLP) provides a ligand contact to (6S)-5,6,7,8-tetrahydrofolate.

This sequence belongs to the Fmt family.

The enzyme catalyses L-methionyl-tRNA(fMet) + (6R)-10-formyltetrahydrofolate = N-formyl-L-methionyl-tRNA(fMet) + (6S)-5,6,7,8-tetrahydrofolate + H(+). Functionally, attaches a formyl group to the free amino group of methionyl-tRNA(fMet). The formyl group appears to play a dual role in the initiator identity of N-formylmethionyl-tRNA by promoting its recognition by IF2 and preventing the misappropriation of this tRNA by the elongation apparatus. The chain is Methionyl-tRNA formyltransferase from Xylella fastidiosa (strain M12).